Reading from the N-terminus, the 49-residue chain is MRVKISLKCSECGKKNYYTDKNKTAKEKLSFRRYCPKCNKHTVHSETKL.

Belongs to the bacterial ribosomal protein bL33 family.

This is Large ribosomal subunit protein bL33 from Pseudothermotoga lettingae (strain ATCC BAA-301 / DSM 14385 / NBRC 107922 / TMO) (Thermotoga lettingae).